A 185-amino-acid chain; its full sequence is Putative tyrosine-protein phosphatase OCA1 (185 aa).

The Tyrosine-protein phosphatase domain occupies 18-178; that stretch reads NFCPVEKQLY…TVEIGSGKGS (161 aa). Cysteine 116 (phosphocysteine intermediate) is an active-site residue.

This sequence belongs to the protein-tyrosine phosphatase family.

The protein resides in the cytoplasm. It catalyses the reaction O-phospho-L-tyrosyl-[protein] + H2O = L-tyrosyl-[protein] + phosphate. Its function is as follows. Putative tyrosine-protein phosphatase required for protection against superoxide stress. This is Putative tyrosine-protein phosphatase OCA1 (OCA1) from Meyerozyma guilliermondii (strain ATCC 6260 / CBS 566 / DSM 6381 / JCM 1539 / NBRC 10279 / NRRL Y-324) (Yeast).